The chain runs to 1164 residues: Phytochrome D (1164 aa).

Residues 1 to 55 (MVSGGGSKTSGGEAASSGHRRSRHTSAAEQAQSSANKALRSQNQQPQNHGGGTES) form a disordered region. Over residues 25–55 (TSAAEQAQSSANKALRSQNQQPQNHGGGTES) the composition is skewed to polar residues. The GAF domain occupies 255-437 (DIKLLCDTVV…AFGLQLNMEL (183 aa)). Phytochromobilin is bound at residue C360. PAS domains lie at 656-727 (VARE…LKGD) and 790-861 (DYKA…MIVL). The 220-residue stretch at 938–1157 (YIFQVIKNPL…LIVIELPVPL (220 aa)) folds into the Histidine kinase domain.

Belongs to the phytochrome family. Homodimer. Post-translationally, contains one covalently linked phytochromobilin chromophore.

Regulatory photoreceptor which exists in two forms that are reversibly interconvertible by light: the Pr form that absorbs maximally in the red region of the spectrum and the Pfr form that absorbs maximally in the far-red region. Photoconversion of Pr to Pfr induces an array of morphogenic responses, whereas reconversion of Pfr to Pr cancels the induction of those responses. Pfr controls the expression of a number of nuclear genes including those encoding the small subunit of ribulose-bisphosphate carboxylase, chlorophyll A/B binding protein, protochlorophyllide reductase, rRNA, etc. It also controls the expression of its own gene(s) in a negative feedback fashion. In Arabidopsis thaliana (Mouse-ear cress), this protein is Phytochrome D (PHYD).